Here is a 209-residue protein sequence, read N- to C-terminus: Probable peptide export ATP-binding protein YydI (209 aa).

The 207-residue stretch at methionine 1–isoleucine 207 folds into the ABC transporter domain. An ATP-binding site is contributed by glycine 33–serine 40.

Belongs to the ABC transporter superfamily. As to quaternary structure, the complex is composed of two ATP-binding proteins (YydI), two transmembrane proteins (YydJ).

Functionally, suggested to be part of an ABC transporter complex YydIJ involved in export of the modified peptide YydF. Responsible for energy coupling to the transport system. In Bacillus subtilis (strain 168), this protein is Probable peptide export ATP-binding protein YydI (yydI).